We begin with the raw amino-acid sequence, 672 residues long: DNA ligase (672 aa).

Residues 32–36 (DEKYD), 82–83 (SL), and Glu113 contribute to the NAD(+) site. The N6-AMP-lysine intermediate role is filled by Lys115. NAD(+) contacts are provided by Arg136, Glu173, Lys290, and Lys314. Residues Cys408, Cys411, Cys427, and Cys433 each contribute to the Zn(2+) site. The region spanning 592–672 (DNNNTLFRKK…EFLNIINVYL (81 aa)) is the BRCT domain.

This sequence belongs to the NAD-dependent DNA ligase family. LigA subfamily. Mg(2+) serves as cofactor. Requires Mn(2+) as cofactor.

The enzyme catalyses NAD(+) + (deoxyribonucleotide)n-3'-hydroxyl + 5'-phospho-(deoxyribonucleotide)m = (deoxyribonucleotide)n+m + AMP + beta-nicotinamide D-nucleotide.. Functionally, DNA ligase that catalyzes the formation of phosphodiester linkages between 5'-phosphoryl and 3'-hydroxyl groups in double-stranded DNA using NAD as a coenzyme and as the energy source for the reaction. It is essential for DNA replication and repair of damaged DNA. The polypeptide is DNA ligase (Buchnera aphidicola subsp. Baizongia pistaciae (strain Bp)).